Here is a 502-residue protein sequence, read N- to C-terminus: Glycerol kinase (502 aa).

ADP is bound at residue Thr-14. Residues Thr-14, Thr-15, and Ser-16 each contribute to the ATP site. Thr-14 contributes to the sn-glycerol 3-phosphate binding site. Arg-18 contributes to the ADP binding site. Sn-glycerol 3-phosphate is bound by residues Arg-84, Glu-85, Tyr-136, and Asp-246. Glycerol contacts are provided by Arg-84, Glu-85, Tyr-136, Asp-246, and Gln-247. Residues Thr-268 and Gly-311 each coordinate ADP. Residues Thr-268, Gly-311, Gln-315, and Gly-412 each coordinate ATP. Residues Gly-412 and Asn-416 each coordinate ADP.

The protein belongs to the FGGY kinase family. In terms of assembly, homotetramer and homodimer (in equilibrium). Heterodimer with EIIA-Glc. Binds 1 zinc ion per glycerol kinase EIIA-Glc dimer. The zinc ion is important for dimerization.

The catalysed reaction is glycerol + ATP = sn-glycerol 3-phosphate + ADP + H(+). It participates in polyol metabolism; glycerol degradation via glycerol kinase pathway; sn-glycerol 3-phosphate from glycerol: step 1/1. With respect to regulation, activity of this regulatory enzyme is affected by several metabolites. Allosterically and non-competitively inhibited by fructose 1,6-bisphosphate (FBP) and unphosphorylated phosphocarrier protein EIIA-Glc (III-Glc), an integral component of the bacterial phosphotransferase (PTS) system. Its function is as follows. Key enzyme in the regulation of glycerol uptake and metabolism. Catalyzes the phosphorylation of glycerol to yield sn-glycerol 3-phosphate. The protein is Glycerol kinase of Salmonella typhimurium (strain LT2 / SGSC1412 / ATCC 700720).